A 399-amino-acid polypeptide reads, in one-letter code: Elongation factor Tu (399 aa).

The 195-residue stretch at 10 to 204 (KPHVNIGTIG…AVDASIPEPE (195 aa)) folds into the tr-type G domain. The tract at residues 19–26 (GHVDHGKT) is G1. GTP is bound at residue 19 to 26 (GHVDHGKT). Position 26 (Thr26) interacts with Mg(2+). A G2 region spans residues 60–64 (GITIN). The interval 81–84 (DCPG) is G3. GTP contacts are provided by residues 81 to 85 (DCPGH) and 136 to 139 (NKCD). Positions 136-139 (NKCD) are G4. Positions 174–176 (SGL) are G5.

This sequence belongs to the TRAFAC class translation factor GTPase superfamily. Classic translation factor GTPase family. EF-Tu/EF-1A subfamily. As to quaternary structure, monomer.

It is found in the cytoplasm. The catalysed reaction is GTP + H2O = GDP + phosphate + H(+). Its function is as follows. GTP hydrolase that promotes the GTP-dependent binding of aminoacyl-tRNA to the A-site of ribosomes during protein biosynthesis. The sequence is that of Elongation factor Tu from Prochlorococcus marinus (strain MIT 9215).